The sequence spans 989 residues: Phosphoenolpyruvate carboxylase (989 aa).

Active-site residues include histidine 175 and lysine 630.

It belongs to the PEPCase type 1 family. Requires Mg(2+) as cofactor.

It carries out the reaction oxaloacetate + phosphate = phosphoenolpyruvate + hydrogencarbonate. In terms of biological role, forms oxaloacetate, a four-carbon dicarboxylic acid source for the tricarboxylic acid cycle. The chain is Phosphoenolpyruvate carboxylase from Prochlorococcus marinus (strain MIT 9215).